Here is an 84-residue protein sequence, read N- to C-terminus: Small ribosomal subunit protein bS16 (84 aa).

The protein belongs to the bacterial ribosomal protein bS16 family.

This is Small ribosomal subunit protein bS16 from Dechloromonas aromatica (strain RCB).